Reading from the N-terminus, the 1068-residue chain is Carbamoyl phosphate synthase large chain (1068 aa).

A carboxyphosphate synthetic domain region spans residues 1 to 401 (MPRRTDLHRI…SLLKAVRSLE (401 aa)). 12 residues coordinate ATP: Arg129, Arg169, Gly175, Gly176, Gln208, Ile210, Glu215, Gly241, Val242, His243, Gln284, and Glu298. The ATP-grasp 1 domain maps to 133–327 (KQLMDELGQP…IAKIAAKIAV (195 aa)). Gln284, Glu298, and Asn300 together coordinate Mg(2+). Mn(2+) is bound by residues Gln284, Glu298, and Asn300. Residues 402-546 (IGVDHLALRE…YSTYEMENES (145 aa)) are oligomerization domain. The tract at residues 547 to 935 (KKSQRPSVLV…ALYKVFEAAN (389 aa)) is carbamoyl phosphate synthetic domain. One can recognise an ATP-grasp 2 domain in the interval 671–867 (ESLLAELGIP…MAEVATRIIL (197 aa)). 10 residues coordinate ATP: Arg707, Arg746, Leu748, Glu752, Gly777, Val778, His779, Ser780, Gln820, and Glu838. Positions 820, 838, and 840 each coordinate Mg(2+). The Mn(2+) site is built by Gln820, Glu838, and Asn840. Positions 936-1068 (LHVPEYGKIL…ESRVFSTESI (133 aa)) constitute an MGS-like domain. Residues 936–1068 (LHVPEYGKIL…ESRVFSTESI (133 aa)) form an allosteric domain region.

The protein belongs to the CarB family. In terms of assembly, composed of two chains; the small (or glutamine) chain promotes the hydrolysis of glutamine to ammonia, which is used by the large (or ammonia) chain to synthesize carbamoyl phosphate. Tetramer of heterodimers (alpha,beta)4. Mg(2+) serves as cofactor. Requires Mn(2+) as cofactor.

It catalyses the reaction hydrogencarbonate + L-glutamine + 2 ATP + H2O = carbamoyl phosphate + L-glutamate + 2 ADP + phosphate + 2 H(+). The catalysed reaction is hydrogencarbonate + NH4(+) + 2 ATP = carbamoyl phosphate + 2 ADP + phosphate + 2 H(+). It functions in the pathway amino-acid biosynthesis; L-arginine biosynthesis; carbamoyl phosphate from bicarbonate: step 1/1. Its pathway is pyrimidine metabolism; UMP biosynthesis via de novo pathway; (S)-dihydroorotate from bicarbonate: step 1/3. In terms of biological role, large subunit of the glutamine-dependent carbamoyl phosphate synthetase (CPSase). CPSase catalyzes the formation of carbamoyl phosphate from the ammonia moiety of glutamine, carbonate, and phosphate donated by ATP, constituting the first step of 2 biosynthetic pathways, one leading to arginine and/or urea and the other to pyrimidine nucleotides. The large subunit (synthetase) binds the substrates ammonia (free or transferred from glutamine from the small subunit), hydrogencarbonate and ATP and carries out an ATP-coupled ligase reaction, activating hydrogencarbonate by forming carboxy phosphate which reacts with ammonia to form carbamoyl phosphate. This Cutibacterium acnes (strain DSM 16379 / KPA171202) (Propionibacterium acnes) protein is Carbamoyl phosphate synthase large chain.